Consider the following 158-residue polypeptide: Small ribosomal subunit protein uS19 (158 aa).

It belongs to the universal ribosomal protein uS19 family.

In terms of biological role, protein S19 forms a complex with S13 that binds strongly to the 16S ribosomal RNA. This Pyrobaculum calidifontis (strain DSM 21063 / JCM 11548 / VA1) protein is Small ribosomal subunit protein uS19.